A 382-amino-acid polypeptide reads, in one-letter code: Opsin-VA (382 aa).

Residues 1-35 are Extracellular-facing; the sequence is MELFPVAVNGVSHAEDPFSGPLTFIAPWNYKVLAT. A helical membrane pass occupies residues 36–56; sequence LMFVVTAASLSENFAVMLVTF. The Cytoplasmic portion of the chain corresponds to 57–67; sequence RFTQLRKPLNY. The helical transmembrane segment at 68–88 threads the bilayer; sequence IIVNLSLADFLVSLTGGTISF. Over 89 to 103 the chain is Extracellular; sequence LTNYHGYFFLGKWAC. A disulfide bond links cysteine 103 and cysteine 180. Residues 104-124 form a helical membrane-spanning segment; it reads VLEGFAVTYFGIVALWSLAVL. The Cytoplasmic segment spans residues 125 to 147; the sequence is AFERFFVICRPLGNIRLRGKHAA. A helical transmembrane segment spans residues 148–168; sequence LGLLFVWTFSFIWTIPPVLGW. Residues 169 to 193 lie on the Extracellular side of the membrane; the sequence is SSYTVSKIGTTCEPNWYSGNFHDHT. The helical transmembrane segment at 194 to 214 threads the bilayer; sequence FIIAFFITCFILPLGVIVVCY. The Cytoplasmic segment spans residues 215 to 244; the sequence is CKLIKKLRKVSNTHGRLGNARKPERQVTRM. The helical transmembrane segment at 245–265 threads the bilayer; the sequence is VVVMIVAFMVAWTPYAAFSIV. The Extracellular segment spans residues 266 to 279; the sequence is VTAHPSIHLDPRLA. The helical transmembrane segment at 280–300 threads the bilayer; sequence AAPAFFSKTAAVYNPVIYVFM. Lysine 287 is subject to N6-(retinylidene)lysine. Over 301 to 382 the chain is Cytoplasmic; the sequence is NKQFRKCLVQ…PIPENKVCPM (82 aa). The segment covering 330–346 has biased composition (polar residues); that stretch reads RQGMTNESHTGEMSTIA. Residues 330–371 form a disordered region; it reads RQGMTNESHTGEMSTIASRIPKDGSIPEKTQEHPGERRSLAH. Over residues 349–368 the composition is skewed to basic and acidic residues; sequence IPKDGSIPEKTQEHPGERRS.

This sequence belongs to the G-protein coupled receptor 1 family. Opsin subfamily. Expressed in a subset of retinal horizontal cells as well as in retinal ganglion cells.

The protein localises to the membrane. The polypeptide is Opsin-VA (Rutilus rutilus (Roach)).